A 172-amino-acid chain; its full sequence is Melanocortin-2 receptor accessory protein (172 aa).

A helical transmembrane segment spans residues 38-58 (IVIAFWVSLAAFVVLLFLILL). Disordered regions lie at residues 105 to 136 (QAQA…LGGF) and 151 to 172 (GPLV…QLQS).

The protein belongs to the MRAP family. As to quaternary structure, homodimer and heterodimer. Forms antiparallel homodimers and heterodimers with MRAP2. Interacts with MC1R, MC2R, MC3R, MC4R and MC5R. In terms of tissue distribution, expressed in adrenal cortex, testis, breast, thyroid, lymph node, ovary and fat. Expressed in adipose tissues.

The protein resides in the cell membrane. It localises to the endoplasmic reticulum membrane. Modulator of melanocortin receptors (MC1R, MC2R, MC3R, MC4R and MC5R). Acts by increasing ligand-sensitivity of melanocortin receptors and enhancing generation of cAMP by the receptors. Required both for MC2R trafficking to the cell surface of adrenal cells and for signaling in response to corticotropin (ACTH). May be involved in the intracellular trafficking pathways in adipocyte cells. The sequence is that of Melanocortin-2 receptor accessory protein (MRAP) from Homo sapiens (Human).